The chain runs to 108 residues: Peptidyl-prolyl cis-trans isomerase FKBP1A (108 aa).

Positions 20–108 constitute a PPIase FKBP-type domain; that stretch reads GQTVVVHYVG…TFDVELLRLE (89 aa).

It belongs to the FKBP-type PPIase family. FKBP1 subfamily.

The protein resides in the cytoplasm. The catalysed reaction is [protein]-peptidylproline (omega=180) = [protein]-peptidylproline (omega=0). Its activity is regulated as follows. Inhibited by both FK506 and rapamycin. In terms of biological role, keeps in an inactive conformation TGFBR1, the TGF-beta type I serine/threonine kinase receptor, preventing TGF-beta receptor activation in absence of ligand. May modulate the RYR1 calcium channel activity. PPIases accelerate the folding of proteins. It catalyzes the cis-trans isomerization of proline imidic peptide bonds in oligopeptides. This Xenopus laevis (African clawed frog) protein is Peptidyl-prolyl cis-trans isomerase FKBP1A (fkbp1a).